Consider the following 165-residue polypeptide: ATP synthase subunit b (165 aa).

A helical membrane pass occupies residues 7–27; sequence STTIGDIIIVSGSVLLLFILI.

It belongs to the ATPase B chain family. In terms of assembly, F-type ATPases have 2 components, F(1) - the catalytic core - and F(0) - the membrane proton channel. F(1) has five subunits: alpha(3), beta(3), gamma(1), delta(1), epsilon(1). F(0) has three main subunits: a(1), b(2) and c(10-14). The alpha and beta chains form an alternating ring which encloses part of the gamma chain. F(1) is attached to F(0) by a central stalk formed by the gamma and epsilon chains, while a peripheral stalk is formed by the delta and b chains.

Its subcellular location is the cell membrane. Functionally, f(1)F(0) ATP synthase produces ATP from ADP in the presence of a proton or sodium gradient. F-type ATPases consist of two structural domains, F(1) containing the extramembraneous catalytic core and F(0) containing the membrane proton channel, linked together by a central stalk and a peripheral stalk. During catalysis, ATP synthesis in the catalytic domain of F(1) is coupled via a rotary mechanism of the central stalk subunits to proton translocation. Its function is as follows. Component of the F(0) channel, it forms part of the peripheral stalk, linking F(1) to F(0). This is ATP synthase subunit b from Streptococcus agalactiae serotype Ia (strain ATCC 27591 / A909 / CDC SS700).